We begin with the raw amino-acid sequence, 696 residues long: Divalent metal transporter 1 (696 aa).

The tract at residues 1–31 (MHQDNSMRRAINQSRNGGSDSCDINNDREHD) is disordered. Residues 1-236 (MHQDNSMRRA…RSNRLSFMSK (236 aa)) are Cytoplasmic-facing. Polar residues predominate over residues 11–24 (INQSRNGGSDSCDI). The chain crosses the membrane as a helical span at residues 237-255 (LKMYFNYFGPGWIVAIAYL). The Vacuolar segment spans residues 256–288 (DPGNICGNLNVGLIRSDDFINVNSSVKDYTGYR). N-linked (GlcNAc...) asparagine glycosylation is present at asparagine 278. The chain crosses the membrane as a helical span at residues 289 to 311 (LLWVLVYGHILGFIFHTLSMKLG). The Cytoplasmic portion of the chain corresponds to 312–331 (HITGLDLAALCRKEFSSKFS). A helical membrane pass occupies residues 332–357 (YFLYICVQIAIWGAHLQAIIGVFVAI). The Vacuolar segment spans residues 358-362 (NLILG). A helical membrane pass occupies residues 363-382 (IPVKIAILYTLIEAFAYSFL). Topologically, residues 383 to 393 (ENKSLDLLEKV) are cytoplasmic. Residues 394-416 (LSLLIGILVCCFMFNVFMTPINF) traverse the membrane as a helical segment. Over 417 to 435 (QEVASSILYPRIPKGKLLD) the chain is Vacuolar. A helical transmembrane segment spans residues 436-455 (TMGLLGSVISAHIFYLHSNL). At 456-475 (TSKKKPVIYNDRMVKRYNKL) the chain is on the cytoplasmic side. The chain crosses the membrane as a helical span at residues 476-499 (GTIESGGSLLVSCITNCIIVLTFA). The Vacuolar portion of the chain corresponds to 500 to 529 (EVNISGDDRKADYNLFNAYDVMKKYFGKTS). A glycan (N-linked (GlcNAc...) asparagine) is linked at asparagine 502. A helical transmembrane segment spans residues 530-546 (MYIWSFGLLSSGNNASF). The Cytoplasmic portion of the chain corresponds to 547–566 (MCEYASKSVFEGFLNKNVNP). A helical membrane pass occupies residues 567 to 585 (FFRVIFSRIILFIMLYAYV). Topologically, residues 586 to 596 (SYDKYTIDQLS) are vacuolar. Residues 597 to 615 (NFINVVQILLLPLAIIPLY) traverse the membrane as a helical segment. Over 616 to 634 (RFSIHKNVLGKFAIKGAFK) the chain is Cytoplasmic. The helical transmembrane segment at 635 to 657 (YLVFVLVISIIVANFLLTLFDFL) threads the bilayer. At 658-662 (QYAPS) the chain is on the vacuolar side. A helical membrane pass occupies residues 663-684 (NLYVIFIFISSIFYLLFIIYFF). Over 685–696 (NMPITKTYYKDS) the chain is Cytoplasmic.

This sequence belongs to the NRAMP (TC 2.A.55) family.

It localises to the vacuole membrane. The catalysed reaction is Fe(2+)(in) = Fe(2+)(out). Its function is as follows. Iron transporter. Required for parasite development during the blood stages. Required for full pathogenicity. This is Divalent metal transporter 1 from Plasmodium yoelii.